The chain runs to 463 residues: MPPSGPQGTLLLLPLLLLLLLRAVLAVPLERGAPNKEETPATESPDTGLYYHRYLQEVIDVLETDGHFREKLQAANAEDIKSGKLSRELDFVSHHVRTKLDELKRQEVSRLRMLLKAKMDAEQDPNVQVDHLNLLKQFEHLDPQNQHTFEARDLELLIQTATRDLAQYDAAHHEEFKRYEMLKEHERRRYLESLGEEQRKEAERRLEEQQRRHREHPKVNVPGSQAQLKEVWEELDGLDPNRFNPKTFFILHDINSDGVLDEQELEALFTKELEKVYDPKNEEDDMREMEEERLRMREHVMKNVDTNQDRLVTLGEFLASTQRKEFGDTGEGWETVEMHPAYTEEELRRFEEELAAREAELNAKAQRLSQETEALGRSQGRLEAQKRELQQAVLHMEQRKQQQQQQQQQGHKAPAAHPEGQLKFHPDTDDVPVPAPAGDQKEVDTSEKKLLERLPEVEVPQHL.

Positions 1–26 (MPPSGPQGTLLLLPLLLLLLLRAVLA) are cleaved as a signal peptide. S86 bears the Phosphoserine mark. Phosphothreonine is present on T148. Residues 150-218 (EARDLELLIQ…QQRRHREHPK (69 aa)) adopt a coiled-coil conformation. Residues 172 to 218 (HHEEFKRYEMLKEHERRRYLESLGEEQRKEAERRLEEQQRRHREHPK) mediate DNA binding. The span at 193–210 (SLGEEQRKEAERRLEEQQ) shows a compositional bias: basic and acidic residues. The interval 193–221 (SLGEEQRKEAERRLEEQQRRHREHPKVNV) is disordered. Positions 228–321 (LKEVWEELDG…VTLGEFLAST (94 aa)) are binds to GNAI2 and GNAI3. 2 consecutive EF-hand domains span residues 240 to 275 (PNRF…ELEK) and 292 to 327 (ERLR…KEFG). 8 residues coordinate Ca(2+): D253, N255, D257, E264, D305, N307, D309, and E316. The GBA signature appears at 303 to 333 (NVDTNQDRLVTLGEFLASTQRKEFGDTGEGW). Residues 341–409 (AYTEEELRRF…KQQQQQQQQQ (69 aa)) adopt a coiled-coil conformation. The segment at 368 to 463 (LSQETEALGR…LPEVEVPQHL (96 aa)) is disordered. Phosphoserine is present on S369. The span at 439 to 463 (DQKEVDTSEKKLLERLPEVEVPQHL) shows a compositional bias: basic and acidic residues.

Belongs to the nucleobindin family. As to quaternary structure, interacts (via GBA motif) with guanine nucleotide-binding protein G(i) alpha subunits GNAI1, GNAI2 and GNAI3 with higher affinity for GNAI1 and GNAI3 than for GNAI2. Preferentially interacts with inactive rather than active GNAI3. Interaction with GNAI3 is inhibited when NUCB1 binds calcium, probably due to a conformational change which renders the GBA motif inaccessible.

The protein resides in the golgi apparatus. Its subcellular location is the cis-Golgi network membrane. The protein localises to the cytoplasm. It is found in the secreted. In terms of biological role, major calcium-binding protein of the Golgi which may have a role in calcium homeostasis. Acts as a non-receptor guanine nucleotide exchange factor which binds to and activates alpha subunits of guanine nucleotide-binding proteins (G proteins). The protein is Nucleobindin-1 (NUCB1) of Pongo abelii (Sumatran orangutan).